The sequence spans 229 residues: MNGAVPMLAIDGPSGAGKGTVAGLLARRLGWNLLDSGALYRLLAFAAVNHGVDLTNEEALKVLAAHLDVQFVAADGSHGQRIILEGEEVTDVIRTEQVGAGASQVAALPAVRDALLQRQRAFLEAPGLVADGRDMGTVVFPDAPLKIFLTASAEERARRRYLQLKAKGADVDQSALLEEIRERDERDSQRAVAPLKPADDAILLDSTEMSIEAVVETIIRHCERQGWDV.

An ATP-binding site is contributed by 12–20 (GPSGAGKGT).

Belongs to the cytidylate kinase family. Type 1 subfamily.

The protein resides in the cytoplasm. It catalyses the reaction CMP + ATP = CDP + ADP. The enzyme catalyses dCMP + ATP = dCDP + ADP. The polypeptide is Cytidylate kinase (Pseudomonas aeruginosa (strain LESB58)).